The following is a 421-amino-acid chain: Probable acid phosphatase (421 aa).

The active-site Proton donor is the Asp229.

The enzyme catalyses a phosphate monoester + H2O = an alcohol + phosphate. The sequence is that of Probable acid phosphatase from Kluyveromyces lactis (strain ATCC 8585 / CBS 2359 / DSM 70799 / NBRC 1267 / NRRL Y-1140 / WM37) (Yeast).